A 215-amino-acid polypeptide reads, in one-letter code: Eukaryotic translation initiation factor 4E-1A (215 aa).

Positions 1–14 are enriched in low complexity; that stretch reads MATAEPETSTNPSN. The tract at residues 1 to 23 is disordered; it reads MATAEPETSTNPSNSEEKNEENE. Residues 54–55, 100–101, 155–160, and 203–205 contribute to the mRNA site; these read WQ, WE, RTKGDK, and TKS.

It belongs to the eukaryotic initiation factor 4E family. In terms of assembly, interacts with eif4ebp3l. In terms of tissue distribution, expressed in all tissues examined, including gill, fin, heart, intestine, muscle, ovary and testis.

It is found in the cytoplasm. The protein localises to the nucleus. In terms of biological role, recognizes and binds the 7-methylguanosine (m7G)-containing mRNA cap during an early step in the initiation of protein synthesis and facilitates ribosome binding by inducing the unwinding of the mRNAs secondary structures. Also promotes export of a subset of mRNAs from the nucleus to the cytoplasm. This Danio rerio (Zebrafish) protein is Eukaryotic translation initiation factor 4E-1A.